The sequence spans 344 residues: MSNAITMGIFWHLIGAASAACFYAPFKKVKKWSWETMWSVGGIVSWIILPWAISALLLPNFWAYYSSFSLSTLLPVFLFGAMWGIGNINYGLTMRYLGMSMGIGIAIGITLIVGTLMTPIINGNFDVLINTEGGRMTLLGVLVALIGVGIVTRAGQLKERKMGIKAEEFNLKKGLVLAVMCGIFSAGMSFAMNAAKPMHEAAAALGVDPLYVALPSYVVIMGGGAIINLGFCFIRLAKVKDLSLKADFSLAKPLIIHNVLLSALGGLMWYLQFFFYAWGHARIPAQYDYISWMLHMSFYVLCGGIVGLVLKEWNNAGRRPVTVLSLGCVVIIVAANIVGIGMAN.

The next 10 helical transmembrane spans lie at 4–24 (AITM…CFYA), 38–58 (WSVG…ALLL), 68–88 (FSLS…IGNI), 101–121 (MGIG…TPII), 137–157 (TLLG…AGQL), 175–195 (LVLA…MNAA), 214–234 (LPSY…FCFI), 259–279 (VLLS…YAWG), 290–310 (ISWM…GLVL), and 323–343 (VLSL…IGMA).

The protein belongs to the L-rhamnose transporter (TC 2.A.7.6) family.

Its subcellular location is the cell inner membrane. The catalysed reaction is L-rhamnopyranose(in) + H(+)(in) = L-rhamnopyranose(out) + H(+)(out). Functionally, uptake of L-rhamnose across the cytoplasmic membrane with the concomitant transport of protons into the cell (symport system). This Escherichia coli O127:H6 (strain E2348/69 / EPEC) protein is L-rhamnose-proton symporter.